Consider the following 306-residue polypeptide: Probable pinoresinol-lariciresinol reductase 3 (306 aa).

NADP(+) contacts are provided by residues 14–20, arginine 39, and lysine 46; that span reads GATGRLG. Lysine 131 serves as the catalytic Proton acceptor. Arginine 135 contacts NADP(+).

The protein belongs to the NmrA-type oxidoreductase family. Isoflavone reductase subfamily. In terms of assembly, dimer.

Probable reductase that might be involved in the reduction of lariciresinol into secoisolariciresinol. In most plant species, a single enzyme is able to reduce both pinoresinol and lariciresinol efficiently while in Arabidopsis, PRR1 and PRR2 show a strict substrate selectivity for pinoresinol. In Arabidopsis thaliana (Mouse-ear cress), this protein is Probable pinoresinol-lariciresinol reductase 3 (PLR3).